Reading from the N-terminus, the 448-residue chain is tRNA modification GTPase MnmE (448 aa).

The (6S)-5-formyl-5,6,7,8-tetrahydrofolate site is built by Arg22, Glu79, and Lys118. The TrmE-type G domain maps to 214 to 371; the sequence is GLHVVLAGQP…LRQELLRIAG (158 aa). Asn224 contacts K(+). GTP contacts are provided by residues 224 to 229, 243 to 249, and 268 to 271; these read NVGKSS, TPIAGTT, and DTAG. Ser228 is a binding site for Mg(2+). K(+)-binding residues include Thr243, Ile245, and Thr248. Thr249 provides a ligand contact to Mg(2+). Lys448 serves as a coordination point for (6S)-5-formyl-5,6,7,8-tetrahydrofolate.

The protein belongs to the TRAFAC class TrmE-Era-EngA-EngB-Septin-like GTPase superfamily. TrmE GTPase family. As to quaternary structure, homodimer. Heterotetramer of two MnmE and two MnmG subunits. K(+) serves as cofactor.

It localises to the cytoplasm. Its function is as follows. Exhibits a very high intrinsic GTPase hydrolysis rate. Involved in the addition of a carboxymethylaminomethyl (cmnm) group at the wobble position (U34) of certain tRNAs, forming tRNA-cmnm(5)s(2)U34. The polypeptide is tRNA modification GTPase MnmE (Dechloromonas aromatica (strain RCB)).